The following is a 124-amino-acid chain: Large ribosomal subunit protein bL17 (124 aa).

Belongs to the bacterial ribosomal protein bL17 family. Part of the 50S ribosomal subunit. Contacts protein L32.

This is Large ribosomal subunit protein bL17 from Acidithiobacillus ferrooxidans (strain ATCC 23270 / DSM 14882 / CIP 104768 / NCIMB 8455) (Ferrobacillus ferrooxidans (strain ATCC 23270)).